Reading from the N-terminus, the 201-residue chain is ATP-dependent Clp protease proteolytic subunit 2 (201 aa).

Residue serine 101 is the Nucleophile of the active site. Histidine 126 is an active-site residue.

It belongs to the peptidase S14 family. Fourteen ClpP subunits assemble into 2 heptameric rings which stack back to back to give a disk-like structure with a central cavity, resembling the structure of eukaryotic proteasomes.

Its subcellular location is the cytoplasm. It catalyses the reaction Hydrolysis of proteins to small peptides in the presence of ATP and magnesium. alpha-casein is the usual test substrate. In the absence of ATP, only oligopeptides shorter than five residues are hydrolyzed (such as succinyl-Leu-Tyr-|-NHMec, and Leu-Tyr-Leu-|-Tyr-Trp, in which cleavage of the -Tyr-|-Leu- and -Tyr-|-Trp bonds also occurs).. Functionally, cleaves peptides in various proteins in a process that requires ATP hydrolysis. Has a chymotrypsin-like activity. Plays a major role in the degradation of misfolded proteins. This is ATP-dependent Clp protease proteolytic subunit 2 from Prochlorococcus marinus subsp. pastoris (strain CCMP1986 / NIES-2087 / MED4).